A 263-amino-acid chain; its full sequence is Calpain small subunit 1 (263 aa).

N-acetylmethionine is present on Met1. Ser6 bears the Phosphoserine mark. The region spanning 91 to 125 (EEVRQFRRLFAQLAGDDMEVSATELMNILNKVVTR) is the EF-hand 1; atypical domain. Ca(2+) is bound by residues Ala104, Asp107, Glu109, Glu114, Asp132, Asp147, Asp149, Thr151, Lys153, and Glu158. 4 consecutive EF-hand domains span residues 134 to 167 (FGIDTCRSMVAVMDSDTTGKLGFEEFKYLWNNIK), 164 to 199 (NNIKKWQAVYKQFDVDRSGTIGSSELPGAFEAAGFR), 200 to 228 (LNEHLYNMIIRRYSDEGGNMDFDNFISCL), and 229 to 263 (VRLDAMFRAFKSLDKDGTGQIQVNIQEWLQLTMYS). Lys174 carries the N6-acetyllysine modification. Ca(2+) is bound by residues Asp177, Asp179, Ser181, Thr183, Glu188, and Asp220.

Homodimer or heterodimer of a large (catalytic) and a small (regulatory) subunit. In presence of calcium, the heterodimer dissociates.

It is found in the cytoplasm. The protein resides in the cell membrane. Functionally, regulatory subunit of the calcium-regulated non-lysosomal thiol-protease which catalyzes limited proteolysis of substrates involved in cytoskeletal remodeling and signal transduction. Essential for embryonic development. This Bos taurus (Bovine) protein is Calpain small subunit 1 (CAPNS1).